Here is a 198-residue protein sequence, read N- to C-terminus: Small ribosomal subunit protein uS4 (198 aa).

The S4 RNA-binding domain maps to 91–154 (SRLDNVVYRL…KNLNIVQEAL (64 aa)).

This sequence belongs to the universal ribosomal protein uS4 family. Part of the 30S ribosomal subunit. Contacts protein S5. The interaction surface between S4 and S5 is involved in control of translational fidelity.

One of the primary rRNA binding proteins, it binds directly to 16S rRNA where it nucleates assembly of the body of the 30S subunit. Its function is as follows. With S5 and S12 plays an important role in translational accuracy. In Aster yellows witches'-broom phytoplasma (strain AYWB), this protein is Small ribosomal subunit protein uS4.